The following is a 122-amino-acid chain: Large ribosomal subunit protein uL29 (122 aa).

Phosphoserine is present on Ser-12.

Belongs to the universal ribosomal protein uL29 family. As to quaternary structure, component of the large ribosomal subunit (LSU). Mature yeast ribosomes consist of a small (40S) and a large (60S) subunit. The 40S small subunit contains 1 molecule of ribosomal RNA (18S rRNA) and at least 33 different proteins. The large 60S subunit contains 3 rRNA molecules (25S, 5.8S and 5S rRNA) and at least 46 different proteins. uL29 is associated with the polypeptide exit tunnel.

It is found in the cytoplasm. It localises to the nucleus. The protein localises to the nucleolus. Its function is as follows. Component of the ribosome, a large ribonucleoprotein complex responsible for the synthesis of proteins in the cell. The small ribosomal subunit (SSU) binds messenger RNAs (mRNAs) and translates the encoded message by selecting cognate aminoacyl-transfer RNA (tRNA) molecules. The large subunit (LSU) contains the ribosomal catalytic site termed the peptidyl transferase center (PTC), which catalyzes the formation of peptide bonds, thereby polymerizing the amino acids delivered by tRNAs into a polypeptide chain. The nascent polypeptides leave the ribosome through a tunnel in the LSU and interact with protein factors that function in enzymatic processing, targeting, and the membrane insertion of nascent chains at the exit of the ribosomal tunnel. The polypeptide is Large ribosomal subunit protein uL29 (rpl35) (Schizosaccharomyces pombe (strain 972 / ATCC 24843) (Fission yeast)).